Consider the following 367-residue polypeptide: Phosphoribosylaminoimidazole-succinocarboxamide synthase (367 aa).

Belongs to the SAICAR synthetase family.

It catalyses the reaction 5-amino-1-(5-phospho-D-ribosyl)imidazole-4-carboxylate + L-aspartate + ATP = (2S)-2-[5-amino-1-(5-phospho-beta-D-ribosyl)imidazole-4-carboxamido]succinate + ADP + phosphate + 2 H(+). It participates in purine metabolism; IMP biosynthesis via de novo pathway; 5-amino-1-(5-phospho-D-ribosyl)imidazole-4-carboxamide from 5-amino-1-(5-phospho-D-ribosyl)imidazole-4-carboxylate: step 1/2. The protein is Phosphoribosylaminoimidazole-succinocarboxamide synthase of Shewanella sp. (strain W3-18-1).